The following is a 236-amino-acid chain: Small ribosomal subunit protein uS3 (236 aa).

In terms of domain architecture, KH type-2 spans 39 to 107; it reads IREFLTEELK…DTSLNIVEVR (69 aa). A disordered region spans residues 214–236; it reads ASERRAVEGDNQGSSSNRRRENA.

It belongs to the universal ribosomal protein uS3 family. Part of the 30S ribosomal subunit. Forms a tight complex with proteins S10 and S14.

Binds the lower part of the 30S subunit head. Binds mRNA in the 70S ribosome, positioning it for translation. This chain is Small ribosomal subunit protein uS3, found in Brucella anthropi (strain ATCC 49188 / DSM 6882 / CCUG 24695 / JCM 21032 / LMG 3331 / NBRC 15819 / NCTC 12168 / Alc 37) (Ochrobactrum anthropi).